Consider the following 575-residue polypeptide: V-type ATP synthase alpha chain (575 aa).

Position 238-245 (238-245 (GPFGAGKT)) interacts with ATP.

Belongs to the ATPase alpha/beta chains family.

The catalysed reaction is ATP + H2O + 4 H(+)(in) = ADP + phosphate + 5 H(+)(out). In terms of biological role, produces ATP from ADP in the presence of a proton gradient across the membrane. The V-type alpha chain is a catalytic subunit. The polypeptide is V-type ATP synthase alpha chain (Borreliella burgdorferi (strain ZS7) (Borrelia burgdorferi)).